The following is a 247-amino-acid chain: MQYNFKVEAFEGPLDLLLHLIHRYEIDIYNIPVAEITEQYLSYVHTMKELQLDVASEYLVMAATLLQIKSKMLLPKHEEDVLDNGDDFIDDPRQELMERLIEYKKYKQVATELKEREQERAQLYTRPPIDFTSLQQEEETSLPLDVTLYDMLAAFQKLMRRKKAKKPVTTRITRQEIPIEQRMTDILKQLEIQGGRQSFYDLFVDDEREIMVVTFLAVLELMKNQQIVIEQEHNFDEIFVSSYTKSA.

Belongs to the ScpA family. In terms of assembly, component of a cohesin-like complex composed of ScpA, ScpB and the Smc homodimer, in which ScpA and ScpB bind to the head domain of Smc. The presence of the three proteins is required for the association of the complex with DNA.

It localises to the cytoplasm. Its function is as follows. Participates in chromosomal partition during cell division. May act via the formation of a condensin-like complex containing Smc and ScpB that pull DNA away from mid-cell into both cell halves. This chain is Segregation and condensation protein A, found in Bacillus cereus (strain ATCC 10987 / NRS 248).